The chain runs to 727 residues: Prolyl endopeptidase-like (727 aa).

Active-site charge relay system residues include serine 559, aspartate 645, and histidine 690.

It belongs to the peptidase S9A family. As to quaternary structure, homodimer. Interacts with the AP-1 complex.

The protein resides in the cytoplasm. It is found in the cytosol. It localises to the golgi apparatus. Its subcellular location is the trans-Golgi network. The protein localises to the cytoskeleton. The protein resides in the nucleus. In terms of biological role, serine peptidase whose precise substrate specificity remains unclear. Does not cleave peptides after a arginine or lysine residue. Regulates trans-Golgi network morphology and sorting by regulating the membrane binding of the AP-1 complex. May play a role in the regulation of synaptic vesicle exocytosis. The sequence is that of Prolyl endopeptidase-like (PREPL) from Pongo abelii (Sumatran orangutan).